A 98-amino-acid chain; its full sequence is C-X-C motif chemokine 10 (98 aa).

Positions 1 to 21 (MNQTAILICCLVFLTLSGIQG) are cleaved as a signal peptide. Citrulline is present on Arg-26. 2 disulfide bridges follow: Cys-30-Cys-57 and Cys-32-Cys-74.

The protein belongs to the intercrine alpha (chemokine CxC) family.

The protein localises to the secreted. In terms of biological role, chemotactic for monocytes and T-lymphocytes. Binds to CXCR3. The chain is C-X-C motif chemokine 10 (CXCL10) from Macaca mulatta (Rhesus macaque).